The sequence spans 803 residues: Nuclear factor of activated T-cells, cytoplasmic 1 (803 aa).

The calcineurin-binding stretch occupies residues 101 to 106; the sequence is PRIEIT. Residues 109 to 199 are transactivation domain A (TAD-A); that stretch reads LGLHHNSSQF…CVSPKTTDPE (91 aa). The segment covering 181-195 has biased composition (polar residues); it reads PQTSPWQSPCVSPKT. Residues 181–279 form a disordered region; that stretch reads PQTSPWQSPC…GSPRVSVTDD (99 aa). 2 repeat units span residues 184 to 200 and 214 to 230. A 3 X SP repeats region spans residues 184–279; that stretch reads SPWQSPCVSP…GSPRVSVTDD (96 aa). Ser214 and Ser218 each carry phosphoserine. Positions 214 to 231 are enriched in low complexity; sequence SPRHSPSTSPRTSVTEES. Phosphoserine; by PKA is present on Ser226. Positions 246–248 match the Nuclear localization signal motif; the sequence is KRK. Copy 3 of the repeat occupies 263 to 279; that stretch reads SPTPSPQGSPRVSVTDD. Residue Ser275 is modified to Phosphoserine; by PKA. The Nuclear export signal signature appears at 291–302; sequence SAIVAAINALST. The RHD domain maps to 389-571; it reads PSLPALDWQL…NPIECSQRSA (183 aa). Residues 418-425 mediate DNA binding; it reads RAHYETEG. The Nuclear localization signal motif lies at 661–663; it reads KRK. Residues 723 to 803 are disordered; the sequence is LMPGFPPRPQ…QPQVSPTSSG (81 aa). Positions 778 to 792 are enriched in pro residues; that stretch reads SGVPPGPPQPPPPTL. Positions 793–803 are enriched in low complexity; it reads LQPQVSPTSSG.

As to quaternary structure, member of the multicomponent NFATC transcription complex that consists of at least two components, a pre-existing cytoplasmic component NFATC2 and an inducible nuclear component NFATC1. Other members such as NFATC4, NFATC3 or members of the activating protein-1 family, MAF, GATA4 and Cbp/p300 can also bind the complex. NFATC proteins bind to DNA as monomers. Interacts with HOMER2 and HOMER3; this interaction may compete with calcineurin/PPP3CA-binding and hence prevent NFATC1 dephosphorylation and activation. Interacts with TLE6/GRG6. In terms of processing, phosphorylated by NFATC-kinase and GSK3B; phosphorylation induces NFATC1 nuclear exit and dephosphorylation by calcineurin promotes nuclear import. Phosphorylation by PKA and DYRK2 negatively modulates nuclear accumulation, and promotes subsequent phosphorylation by GSK3B or casein kinase 1.

It is found in the cytoplasm. Its subcellular location is the nucleus. Functionally, plays a role in the inducible expression of cytokine genes in T-cells, especially in the induction of the IL-2 or IL-4 gene transcription. Also controls gene expression in embryonic cardiac cells. Could regulate not only the activation and proliferation but also the differentiation and programmed death of T-lymphocytes as well as lymphoid and non-lymphoid cells. Required for osteoclastogenesis and regulates many genes important for osteoclast differentiation and function. This Bos taurus (Bovine) protein is Nuclear factor of activated T-cells, cytoplasmic 1.